Consider the following 215-residue polypeptide: UPF0056 membrane protein YhcE (215 aa).

The next 6 helical transmembrane spans lie at 14 to 34, 54 to 74, 81 to 101, 120 to 140, 147 to 167, and 189 to 209; these read FFIG…FISM, VAII…LFGI, IAGG…KLGE, VVPL…TIVW, ISYL…CWGL, and IMGL…IKGI.

This sequence belongs to the UPF0056 (MarC) family.

The protein localises to the cell membrane. The chain is UPF0056 membrane protein YhcE (ychE) from Escherichia coli (strain K12).